The chain runs to 261 residues: uncharacterized protein (261 aa).

Residues I33, D78, and N105 each contribute to the NADP(+) site. S157 functions as the Proton donor in the catalytic mechanism. Residues Y172, K176, and S206 each contribute to the NADP(+) site. Y172 acts as the Proton acceptor in catalysis. K176 acts as the Lowers pKa of active site Tyr in catalysis.

It belongs to the short-chain dehydrogenases/reductases (SDR) family.

It localises to the cytoplasm. Its subcellular location is the nucleus. This is an uncharacterized protein from Schizosaccharomyces pombe (strain 972 / ATCC 24843) (Fission yeast).